The sequence spans 883 residues: Alanine--tRNA ligase (883 aa).

The Zn(2+) site is built by His-562, His-566, Cys-675, and His-679.

It belongs to the class-II aminoacyl-tRNA synthetase family. Zn(2+) serves as cofactor.

The protein resides in the cytoplasm. The catalysed reaction is tRNA(Ala) + L-alanine + ATP = L-alanyl-tRNA(Ala) + AMP + diphosphate. Its function is as follows. Catalyzes the attachment of alanine to tRNA(Ala) in a two-step reaction: alanine is first activated by ATP to form Ala-AMP and then transferred to the acceptor end of tRNA(Ala). Also edits incorrectly charged Ser-tRNA(Ala) and Gly-tRNA(Ala) via its editing domain. The chain is Alanine--tRNA ligase from Ruegeria sp. (strain TM1040) (Silicibacter sp.).